Consider the following 329-residue polypeptide: Apolipoprotein E (329 aa).

The first 18 residues, 1–18, serve as a signal peptide directing secretion; it reads MKVLWAALVVALLAGCWA. 8 consecutive repeat copies span residues 92 to 113, 114 to 135, 136 to 157, 158 to 179, 180 to 201, 202 to 223, 224 to 245, and 246 to 267. Residues 92 to 267 form an 8 X 22 AA approximate tandem repeats region; it reads TLMEETMKEI…HLDEVREQME (176 aa). Residue methionine 155 is modified to Methionine sulfoxide. Position 159 is a phosphoserine (serine 159). The segment at 170–180 is LDL and other lipoprotein receptors binding; the sequence is HMRKLRKRVLR. 174-177 serves as a coordination point for heparin; it reads LRKR. Residues 222–302 are lipid-binding and lipoprotein association; sequence HAKVDALATQ…GWFEPLVEDM (81 aa). 241–248 serves as a coordination point for heparin; that stretch reads GQQLRGRL. The segment at 278-329 is homooligomerization; sequence NQMRQQAEAFQARLKGWFEPLVEDMQRQWAVLVEKVQAAVGTSPTTPPVETK. The specificity for association with VLDL stretch occupies residues 290–302; sequence RLKGWFEPLVEDM.

The protein belongs to the apolipoprotein A1/A4/E family. In terms of assembly, homotetramer. May interact with ABCA1; functionally associated with ABCA1 in the biogenesis of HDLs. May interact with APP/A4 amyloid-beta peptide; the interaction is extremely stable in vitro but its physiological significance is unclear. May interact with MAPT. May interact with MAP2. In the cerebrospinal fluid, interacts with secreted SORL1. Interacts with PMEL; this allows the loading of PMEL luminal fragment on ILVs to induce fibril nucleation. In terms of processing, APOE exists as multiple glycosylated and sialylated glycoforms within cells and in plasma. The extent of glycosylation and sialylation are tissue and context specific. Glycated in plasma VLDL. Post-translationally, phosphorylated by FAM20C in the extracellular medium.

The protein localises to the secreted. It is found in the extracellular space. It localises to the extracellular matrix. Its subcellular location is the extracellular vesicle. The protein resides in the endosome. The protein localises to the multivesicular body. Its function is as follows. APOE is an apolipoprotein, a protein associating with lipid particles, that mainly functions in lipoprotein-mediated lipid transport between organs via the plasma and interstitial fluids. APOE is a core component of plasma lipoproteins and is involved in their production, conversion and clearance. Apolipoproteins are amphipathic molecules that interact both with lipids of the lipoprotein particle core and the aqueous environment of the plasma. As such, APOE associates with chylomicrons, chylomicron remnants, very low density lipoproteins (VLDL) and intermediate density lipoproteins (IDL) but shows a preferential binding to high-density lipoproteins (HDL). It also binds a wide range of cellular receptors including the LDL receptor/LDLR, the LDL receptor-related proteins LRP1, LRP2 and LRP8 and the very low-density lipoprotein receptor/VLDLR that mediate the cellular uptake of the APOE-containing lipoprotein particles. Finally, APOE also has a heparin-binding activity and binds heparan-sulfate proteoglycans on the surface of cells, a property that supports the capture and the receptor-mediated uptake of APOE-containing lipoproteins by cells. A main function of APOE is to mediate lipoprotein clearance through the uptake of chylomicrons, VLDLs, and HDLs by hepatocytes. APOE is also involved in the biosynthesis by the liver of VLDLs as well as their uptake by peripheral tissues ensuring the delivery of triglycerides and energy storage in muscle, heart and adipose tissues. By participating in the lipoprotein-mediated distribution of lipids among tissues, APOE plays a critical role in plasma and tissues lipid homeostasis. APOE is also involved in two steps of reverse cholesterol transport, the HDLs-mediated transport of cholesterol from peripheral tissues to the liver, and thereby plays an important role in cholesterol homeostasis. First, it is functionally associated with ABCA1 in the biogenesis of HDLs in tissues. Second, it is enriched in circulating HDLs and mediates their uptake by hepatocytes. APOE also plays an important role in lipid transport in the central nervous system, regulating neuron survival and sprouting. This chain is Apolipoprotein E (APOE), found in Eumetopias jubatus (Steller sea lion).